The sequence spans 154 residues: MPLYEHVLLARQDVTSQQVETMIDTYKGVIEQNGGRLEKIEMWGVKSLAYRIKKNRKAHFALLNIDAPPAAIAEMERQMQISEDVLRFMTIRVEELDSEPSAMMQKRDRDDRKDRERGRRRDDEGFGGGGGFGGDRGDRGDRGDRGERSFGGEG.

The segment at 97 to 154 (DSEPSAMMQKRDRDDRKDRERGRRRDDEGFGGGGGFGGDRGDRGDRGDRGERSFGGEG) is disordered. 2 stretches are compositionally biased toward basic and acidic residues: residues 105–124 (QKRD…RDDE) and 135–154 (DRGD…GGEG).

It belongs to the bacterial ribosomal protein bS6 family.

Binds together with bS18 to 16S ribosomal RNA. The chain is Small ribosomal subunit protein bS6 from Methylobacterium radiotolerans (strain ATCC 27329 / DSM 1819 / JCM 2831 / NBRC 15690 / NCIMB 10815 / 0-1).